We begin with the raw amino-acid sequence, 224 residues long: Putative MgpC-like protein MPN_150 (224 aa).

It belongs to the MgpC family.

This Mycoplasma pneumoniae (strain ATCC 29342 / M129 / Subtype 1) (Mycoplasmoides pneumoniae) protein is Putative MgpC-like protein MPN_150.